The following is a 396-amino-acid chain: Major outer membrane porin, serovar A (396 aa).

Positions 1–22 (MKKLLKSVLVFAALSSASSLQA) are cleaved as a signal peptide.

Belongs to the chlamydial porin (CP) (TC 1.B.2) family. As to quaternary structure, part of a disulfide cross-linked outer membrane complex (COMC) composed of the major outer membrane porin (MOMP), the small cysteine-rich protein (OmcA) and the large cysteine-rich periplasmic protein (OmcB).

The protein localises to the cell outer membrane. Functionally, in elementary bodies (EBs, the infectious stage, which is able to survive outside the host cell) provides the structural integrity of the outer envelope through disulfide cross-links with the small cysteine-rich protein and the large cysteine-rich periplasmic protein. It has been described in publications as the Sarkosyl-insoluble COMC (Chlamydia outer membrane complex), and serves as the functional equivalent of peptidoglycan. Its function is as follows. Permits diffusion of specific solutes through the outer membrane. This is Major outer membrane porin, serovar A (ompA) from Chlamydia trachomatis.